Here is a 530-residue protein sequence, read N- to C-terminus: Dual specificity calcium/calmodulin-dependent 3',5'-cyclic nucleotide phosphodiesterase 1A (530 aa).

2 calmodulin-binding regions span residues 24–44 and 114–137; these read TEKMWQRLKGILRCLVKQLEK and EKPRFRSIVHVVQAGIFVERMYRK. Residues 142 to 508 enclose the PDEase domain; the sequence is VGLAYPEAVI…ERWKELAAQG (367 aa). His-219 (proton donor) is an active-site residue. Zn(2+)-binding residues include His-223, His-259, Asp-260, and Asp-366. Mg(2+) is bound at residue Asp-260. 2 disordered regions span residues 450-471 and 502-530; these read TKTPSYGASRRSNMKGTTNDGT and KELAAQGEPDPHKNSDLVNAEEKHAETHS. The segment covering 451–471 has biased composition (polar residues); that stretch reads KTPSYGASRRSNMKGTTNDGT. Residues 510–530 show a composition bias toward basic and acidic residues; it reads PDPHKNSDLVNAEEKHAETHS.

It belongs to the cyclic nucleotide phosphodiesterase family. PDE1 subfamily. In terms of assembly, homodimer. Interacts with YWHAZ. Zn(2+) serves as cofactor. Mg(2+) is required as a cofactor.

It carries out the reaction a nucleoside 3',5'-cyclic phosphate + H2O = a nucleoside 5'-phosphate + H(+). The enzyme catalyses 3',5'-cyclic GMP + H2O = GMP + H(+). It catalyses the reaction 3',5'-cyclic AMP + H2O = AMP + H(+). Type I PDE are activated by the binding of calmodulin in the presence of Ca(2+). Calcium/calmodulin-dependent cyclic nucleotide phosphodiesterase with a dual specificity for the second messengers cGMP and cAMP, which are key regulators of many important physiological processes. Has a higher efficiency with cGMP compared to cAMP. This Bos taurus (Bovine) protein is Dual specificity calcium/calmodulin-dependent 3',5'-cyclic nucleotide phosphodiesterase 1A.